The following is a 377-amino-acid chain: All-trans-retinol dehydrogenase [NAD(+)] ADH4 (377 aa).

Cysteine 47 lines the Zn(2+) pocket. Residue 48–49 (PT) participates in NAD(+) binding. The Zn(2+) site is built by histidine 68, cysteine 98, cysteine 101, cysteine 104, cysteine 112, and cysteine 179. Residues 204–209 (GLGCVG), aspartate 228, lysine 233, 297–299 (VGA), 320–322 (TFF), and arginine 372 each bind NAD(+).

The protein belongs to the zinc-containing alcohol dehydrogenase family. Class-II subfamily. Dimer. The cofactor is Zn(2+). As to expression, liver specific.

The protein resides in the cytoplasm. The enzyme catalyses all-trans-retinol + NAD(+) = all-trans-retinal + NADH + H(+). It catalyses the reaction 9-cis-retinol + NAD(+) = 9-cis-retinal + NADH + H(+). It carries out the reaction 20-oxo-(5Z,8Z,11Z,14Z)-eicosatetraenoate + NAD(+) + H2O = (5Z,8Z,11Z,14Z)-eicosatetraenedioate + NADH + 2 H(+). The catalysed reaction is 20-hydroxy-(5Z,8Z,11Z,14Z)-eicosatetraenoate + NAD(+) = 20-oxo-(5Z,8Z,11Z,14Z)-eicosatetraenoate + NADH + H(+). The enzyme catalyses 1,4-benzoquinone + NADH + H(+) = hydroquinone + NAD(+). Oxidation of 20-HETE is inhibited by low concentrations of N-heptylformamide. Oxidation of 20-HETE is a decreased by 55-65% by either all-trans-retinol or all-trans-retinoic acid. Strongly inhibited by omega-hydroxy fatty acids. Its function is as follows. Catalyzes the NAD-dependent oxidation of either all-trans-retinol or 9-cis-retinol. Also oxidizes long chain omega-hydroxy fatty acids, such as 20-HETE, producing both the intermediate aldehyde, 20-oxoarachidonate and the end product, a dicarboxylic acid, (5Z,8Z,11Z,14Z)-eicosatetraenedioate. Also catalyzes the reduction of benzoquinones. The chain is All-trans-retinol dehydrogenase [NAD(+)] ADH4 from Rattus norvegicus (Rat).